Reading from the N-terminus, the 316-residue chain is Mycothiol acetyltransferase (316 aa).

2 N-acetyltransferase domains span residues 16–153 (REVR…VPAV) and 156–316 (VRIR…PAAN). A 1D-myo-inositol 2-(L-cysteinylamino)-2-deoxy-alpha-D-glucopyranoside-binding site is contributed by E36. Residues 83 to 85 (LVV) and 91 to 96 (RRGIGS) each bind acetyl-CoA. Residues E183, K228, and E238 each contribute to the 1D-myo-inositol 2-(L-cysteinylamino)-2-deoxy-alpha-D-glucopyranoside site. Acetyl-CoA-binding positions include 242–244 (VGV) and 249–255 (QGRGLGQ). Y283 is a binding site for 1D-myo-inositol 2-(L-cysteinylamino)-2-deoxy-alpha-D-glucopyranoside. 288-293 (NVAAVR) contacts acetyl-CoA.

It belongs to the acetyltransferase family. MshD subfamily. In terms of assembly, monomer.

The catalysed reaction is 1D-myo-inositol 2-(L-cysteinylamino)-2-deoxy-alpha-D-glucopyranoside + acetyl-CoA = mycothiol + CoA + H(+). Functionally, catalyzes the transfer of acetyl from acetyl-CoA to desacetylmycothiol (Cys-GlcN-Ins) to form mycothiol. In Mycobacterium avium (strain 104), this protein is Mycothiol acetyltransferase.